Consider the following 208-residue polypeptide: Small ribosomal subunit protein uS4 (208 aa).

The region spanning 96–159 is the S4 RNA-binding domain; that stretch reads SRLDNIVYRL…KKNEKVLEAL (64 aa).

It belongs to the universal ribosomal protein uS4 family. Part of the 30S ribosomal subunit. Contacts protein S5. The interaction surface between S4 and S5 is involved in control of translational fidelity.

In terms of biological role, one of the primary rRNA binding proteins, it binds directly to 16S rRNA where it nucleates assembly of the body of the 30S subunit. With S5 and S12 plays an important role in translational accuracy. The protein is Small ribosomal subunit protein uS4 of Mycoplasma capricolum subsp. capricolum (strain California kid / ATCC 27343 / NCTC 10154).